Here is a 185-residue protein sequence, read N- to C-terminus: Potassium-transporting ATPase KdpC subunit 2 (185 aa).

A helical transmembrane segment spans residues 8-28 (LGLVLIMFVLCGFIFPLTVTA).

This sequence belongs to the KdpC family. As to quaternary structure, the system is composed of three essential subunits: KdpA, KdpB and KdpC.

It is found in the cell membrane. It localises to the membrane raft. Part of the high-affinity ATP-driven potassium transport (or Kdp) system, which catalyzes the hydrolysis of ATP coupled with the electrogenic transport of potassium into the cytoplasm. This subunit acts as a catalytic chaperone that increases the ATP-binding affinity of the ATP-hydrolyzing subunit KdpB by the formation of a transient KdpB/KdpC/ATP ternary complex. The polypeptide is Potassium-transporting ATPase KdpC subunit 2 (Staphylococcus aureus (strain Mu50 / ATCC 700699)).